A 294-amino-acid chain; its full sequence is Acetylglutamate kinase (294 aa).

Residues 66–67 (GG), Arg88, and Asn193 each bind substrate.

The protein belongs to the acetylglutamate kinase family. ArgB subfamily.

It is found in the cytoplasm. It catalyses the reaction N-acetyl-L-glutamate + ATP = N-acetyl-L-glutamyl 5-phosphate + ADP. It participates in amino-acid biosynthesis; L-arginine biosynthesis; N(2)-acetyl-L-ornithine from L-glutamate: step 2/4. Catalyzes the ATP-dependent phosphorylation of N-acetyl-L-glutamate. This is Acetylglutamate kinase from Agrobacterium fabrum (strain C58 / ATCC 33970) (Agrobacterium tumefaciens (strain C58)).